A 105-amino-acid chain; its full sequence is Small cysteine and glycine repeat-containing protein 10 (105 aa).

The segment at 4-41 (CGCGGCGGRCSGGCGGGCGGGCGGGCGGGCGGCGGGCG) is 10 X 2 AA repeats of CG.

The protein belongs to the KRTAP type 28 family.

In the hair cortex, hair keratin intermediate filaments are embedded in an interfilamentous matrix, consisting of hair keratin-associated proteins (KRTAP), which are essential for the formation of a rigid and resistant hair shaft through their extensive disulfide bond cross-linking with abundant cysteine residues of hair keratins. The matrix proteins include the high-sulfur and high-glycine-tyrosine keratins. The chain is Small cysteine and glycine repeat-containing protein 10 from Homo sapiens (Human).